The chain runs to 224 residues: Adenylate kinase (224 aa).

10 to 15 contacts ATP; sequence GSGKST. The interval 30–59 is NMP; the sequence is SSGDLIRGEIERKSSLGLEMAAYLSRGDLI. AMP contacts are provided by residues Ser31, Arg36, 57–59, 83–86, and Gln90; these read DLI and GYPR. An LID region spans residues 124-161; sequence GRRICPNCGAVYHITYNPPKVPGICDVCGTKLIQRTDD. Position 125 (Arg125) interacts with ATP. Positions 128 and 131 each coordinate Zn(2+). 134 to 135 contributes to the ATP binding site; sequence VY. Residues Cys148 and Cys151 each contribute to the Zn(2+) site. Residues Arg158 and Arg169 each coordinate AMP. Gly197 provides a ligand contact to ATP.

It belongs to the adenylate kinase family. Monomer.

The protein resides in the cytoplasm. The catalysed reaction is AMP + ATP = 2 ADP. The protein operates within purine metabolism; AMP biosynthesis via salvage pathway; AMP from ADP: step 1/1. In terms of biological role, catalyzes the reversible transfer of the terminal phosphate group between ATP and AMP. Plays an important role in cellular energy homeostasis and in adenine nucleotide metabolism. This is Adenylate kinase from Thermococcus gammatolerans (strain DSM 15229 / JCM 11827 / EJ3).